The chain runs to 124 residues: Phosphoribosyl-ATP pyrophosphatase (124 aa).

This sequence belongs to the PRA-PH family.

The protein resides in the cytoplasm. The catalysed reaction is 1-(5-phospho-beta-D-ribosyl)-ATP + H2O = 1-(5-phospho-beta-D-ribosyl)-5'-AMP + diphosphate + H(+). Its pathway is amino-acid biosynthesis; L-histidine biosynthesis; L-histidine from 5-phospho-alpha-D-ribose 1-diphosphate: step 2/9. In Ralstonia pickettii (strain 12J), this protein is Phosphoribosyl-ATP pyrophosphatase.